Consider the following 106-residue polypeptide: MIVFDVSLMIIIIFSFAFNMSQSNILMLYNSPHVLVGSDARNFFSCKKWHRCFSGEVILEEKKSQSALGSRSLTCTCPLISAVQLHLERSFFSLAFFAVILLYIPG.

This is an uncharacterized protein from Saccharomyces cerevisiae (strain ATCC 204508 / S288c) (Baker's yeast).